An 822-amino-acid chain; its full sequence is Cation/H(+) antiporter 3 (822 aa).

A run of 12 helical transmembrane segments spans residues 55–75 (FPHL…LHFF), 116–136 (EIVF…LMGV), 150–170 (AITI…VIFF), 190–210 (YVVI…NLLF), 224–244 (ISSA…LIFM), 274–294 (IVVL…FYII), 305–325 (AIYL…ANWC), 331–351 (MGPF…SAII), 362–382 (FLPF…LFGW), 388–408 (IILI…VPAL), 418–438 (FALS…YALA), and 447–467 (ETFT…PPIL).

Belongs to the monovalent cation:proton antiporter 2 (CPA2) transporter (TC 2.A.37) family. CHX (TC 2.A.37.4) subfamily.

The protein localises to the membrane. May operate as a cation/H(+) antiporter. This is Cation/H(+) antiporter 3 (CHX3) from Arabidopsis thaliana (Mouse-ear cress).